Here is a 101-residue protein sequence, read N- to C-terminus: ATP synthase subunit c (101 aa).

2 helical membrane passes run 31-51 and 81-101; these read AFAY…GAGQ and AISE…IFVG.

Belongs to the ATPase C chain family. As to quaternary structure, F-type ATPases have 2 components, F(1) - the catalytic core - and F(0) - the membrane proton channel. F(1) has five subunits: alpha(3), beta(3), gamma(1), delta(1), epsilon(1). F(0) has three main subunits: a(1), b(2) and c(10-14). The alpha and beta chains form an alternating ring which encloses part of the gamma chain. F(1) is attached to F(0) by a central stalk formed by the gamma and epsilon chains, while a peripheral stalk is formed by the delta and b chains.

It is found in the cell membrane. In terms of biological role, f(1)F(0) ATP synthase produces ATP from ADP in the presence of a proton or sodium gradient. F-type ATPases consist of two structural domains, F(1) containing the extramembraneous catalytic core and F(0) containing the membrane proton channel, linked together by a central stalk and a peripheral stalk. During catalysis, ATP synthesis in the catalytic domain of F(1) is coupled via a rotary mechanism of the central stalk subunits to proton translocation. Key component of the F(0) channel; it plays a direct role in translocation across the membrane. A homomeric c-ring of between 10-14 subunits forms the central stalk rotor element with the F(1) delta and epsilon subunits. This chain is ATP synthase subunit c, found in Mesomycoplasma hyopneumoniae (strain J / ATCC 25934 / NCTC 10110) (Mycoplasma hyopneumoniae).